A 513-amino-acid polypeptide reads, in one-letter code: MSYHSFQPGSRCGSQSFSSYSAVMPRMVTHYAVSKGPCRPGGGRGLRALGCLGSRSLCNVGFGRPRVASRCGGTLPGFGYRLGATCGPSACITPVTINESLLVPLALEIDPTVQRVKRDEKEQIKCLNNRFASFINKVRFLEQKNKLLETKWNFMQQQRCCQTNIEPIFEGYISALRRQLDCVSGDRVRLESELCSLQAALEGYKKKYEEELSLRPCVENEFVALKKDVDTAFLMKADLETNAEALVQEIDFLKSLYEEEICLLQSQISETSVIVKMDNSRELDVDGIIAEIKAQYDDIASRSKAEAEAWYQCRYEELRVTAGNHCDNLRNRKNEILEMNKLIQRLQQETENVKAQRCKLEGAIAEAEQQGEAALNDAKCKLAGLEEALQKAKQDMACLLKEYQEVMNSKLGLDIEIATYRRLLEGEEHRLCEGIGPVNISVSSSKGAFLYEPCGVSTPVLSTGVLRSNGGCSIVGTGELYVPCEPQGLLSCGSGRKSSMTLGAGGSSPSHKH.

The tract at residues 1-120 (MSYHSFQPGS…PTVQRVKRDE (120 aa)) is head. The IF rod domain maps to 120–431 (EKEQIKCLNN…RLLEGEEHRL (312 aa)). The interval 121–155 (KEQIKCLNNRFASFINKVRFLEQKNKLLETKWNFM) is coil 1A. Positions 156-165 (QQQRCCQTNI) are linker 1. Residues 166–266 (EPIFEGYISA…YEEEICLLQS (101 aa)) form a coil 1B region. The segment at 267–283 (QISETSVIVKMDNSREL) is linker 12. The coil 2 stretch occupies residues 284–427 (DVDGIIAEIK…ATYRRLLEGE (144 aa)). The segment at 428–513 (EHRLCEGIGP…AGGSSPSHKH (86 aa)) is tail.

It belongs to the intermediate filament family. Heterotetramer of two type I and two type II keratins.

This chain is Keratin, type II cuticular Hb2 (KRT82), found in Homo sapiens (Human).